The primary structure comprises 72 residues: Large ribosomal subunit protein bL31c (72 aa).

This sequence belongs to the bacterial ribosomal protein bL31 family. Type A subfamily. In terms of assembly, part of the 50S ribosomal subunit.

It is found in the plastid. The protein resides in the chloroplast. Its function is as follows. Binds the 23S rRNA. The polypeptide is Large ribosomal subunit protein bL31c (Trieres chinensis (Marine centric diatom)).